The sequence spans 232 residues: Histone H1-II (232 aa).

Residues Met1–Ala18 are compositionally biased toward low complexity. 2 disordered regions span residues Met1 to Ser44 and Gly103 to Ala232. The 76-residue stretch at Thr39–Ala114 folds into the H15 domain. Basic residues-rich tracts occupy residues Ser149–Lys171 and Ala179–Ala232.

This sequence belongs to the histone H1/H5 family.

The protein resides in the nucleus. It localises to the chromosome. In terms of biological role, histones H1 are necessary for the condensation of nucleosome chains into higher-order structures. The chain is Histone H1-II from Glyptotendipes barbipes (Midge).